Reading from the N-terminus, the 31-residue chain is Potassium channel toxin alpha-KTx 5.1 (31 aa).

3 cysteine pairs are disulfide-bonded: cysteine 3/cysteine 21, cysteine 8/cysteine 26, and cysteine 12/cysteine 28. The [R/K]XCQ motif stretch occupies residues arginine 6–glutamine 9. Histidine 31 is modified (histidine amide).

The protein belongs to the short scorpion toxin superfamily. Potassium channel inhibitor family. Alpha-KTx 05 subfamily. Two disulfide bonds are the minimal requirement needed to produce a nativelike and bio-active conformation in this toxin. The third disulfide provides an additional contribution to structure stabilization and can modulate biological potency depending on its position and the structural regions involved in biological activity. Expressed by the venom gland.

The protein resides in the secreted. Blocker for the small conductance calcium-activated potassium channels. Shows the best affinity for KCa2.2/KCNN2 (Kd=0.2 nM), followed by KCa2.3/KCNN3 (Kd=1.1 nM) and KCa2.1/KCNN1 (Kd=325 nM). This chain is Potassium channel toxin alpha-KTx 5.1, found in Leiurus hebraeus (Hebrew deathstalker scorpion).